A 177-amino-acid polypeptide reads, in one-letter code: Cytidylate kinase (177 aa).

7 to 15 (GSPGSGTTT) serves as a coordination point for ATP.

This sequence belongs to the cytidylate kinase family. Type 2 subfamily.

The protein resides in the cytoplasm. It carries out the reaction CMP + ATP = CDP + ADP. It catalyses the reaction dCMP + ATP = dCDP + ADP. This is Cytidylate kinase from Methanocorpusculum labreanum (strain ATCC 43576 / DSM 4855 / Z).